The sequence spans 594 residues: Fidgetin-like protein 1 (594 aa).

2 disordered regions span residues 1-79 and 239-261; these read MYSP…DDEL and QSIG…KRCS. Over residues 56 to 73 the composition is skewed to polar residues; that stretch reads PSDSAQQQPPFKSRSQQN. ATP is bound by residues Ala319 and 359-364; that span reads GTGKTM.

This sequence belongs to the AAA ATPase family. Hexamer. Requires Mg(2+) as cofactor. Expressed in germ cells.

The protein localises to the nucleus. The enzyme catalyses ATP + H2O = ADP + phosphate + H(+). Functionally, has a role in spindle assembly which acts in the progression through mitosis during embryogenesis. Required for fertility. In Caenorhabditis elegans, this protein is Fidgetin-like protein 1 (figl-1).